A 423-amino-acid chain; its full sequence is Deferrochelatase (423 aa).

Residues 1 to 35 (MQYEDENGVNEPSRRRLLKGIGALALAGSCPVAHA) constitute a signal peptide (tat-type signal). Heme b contacts are provided by residues 236–238 (GTA), His329, 334–336 (NPR), and Arg347.

The protein belongs to the DyP-type peroxidase family. EfeB subfamily. As to quaternary structure, homodimer. Part of a ferrous iron transporter composed of EfeU, EfeO and EfeB. Requires heme b as cofactor. Post-translationally, predicted to be exported by the Tat system. The position of the signal peptide cleavage has not been experimentally proven.

The protein resides in the periplasm. The enzyme catalyses heme b + 2 H(+) = protoporphyrin IX + Fe(2+). Involved in the recovery of exogenous heme iron. Extracts iron from heme while preserving the protoporphyrin ring intact. This is Deferrochelatase (efeB) from Escherichia coli O6:H1 (strain CFT073 / ATCC 700928 / UPEC).